The sequence spans 421 residues: 3-isopropylmalate dehydratase large subunit (421 aa).

3 residues coordinate [4Fe-4S] cluster: Cys302, Cys362, and Cys365.

The protein belongs to the aconitase/IPM isomerase family. LeuC type 2 subfamily. In terms of assembly, heterodimer of LeuC and LeuD. [4Fe-4S] cluster is required as a cofactor.

The catalysed reaction is (2R,3S)-3-isopropylmalate = (2S)-2-isopropylmalate. It functions in the pathway amino-acid biosynthesis; L-leucine biosynthesis; L-leucine from 3-methyl-2-oxobutanoate: step 2/4. Functionally, catalyzes the isomerization between 2-isopropylmalate and 3-isopropylmalate, via the formation of 2-isopropylmaleate. This Nitratiruptor sp. (strain SB155-2) protein is 3-isopropylmalate dehydratase large subunit.